The chain runs to 245 residues: Uridylate kinase (245 aa).

Residue 13–16 (KLSG) coordinates ATP. Gly-56 lines the UMP pocket. The ATP site is built by Gly-57 and Arg-61. Residues Asp-76 and 138-145 (TGRPFFTT) each bind UMP. ATP-binding residues include Asn-166, Tyr-172, and Asp-175.

It belongs to the UMP kinase family. Homohexamer.

It localises to the cytoplasm. The catalysed reaction is UMP + ATP = UDP + ADP. It participates in pyrimidine metabolism; CTP biosynthesis via de novo pathway; UDP from UMP (UMPK route): step 1/1. With respect to regulation, inhibited by UTP. Functionally, catalyzes the reversible phosphorylation of UMP to UDP. The protein is Uridylate kinase of Mycoplasma mobile (strain ATCC 43663 / 163K / NCTC 11711) (Mesomycoplasma mobile).